We begin with the raw amino-acid sequence, 632 residues long: Extracellular metalloproteinase 5 (632 aa).

Residues 1–20 (MHGLLLAAGLLSLPLHVLAH) form the signal peptide. A propeptide spanning residues 21 to 244 (PQPGTSLAGR…HNVVDYVSHA (224 aa)) is cleaved from the precursor. Asn284 carries an N-linked (GlcNAc...) asparagine glycan. His427 provides a ligand contact to Zn(2+). Glu428 is a catalytic residue. His431 lines the Zn(2+) pocket. N-linked (GlcNAc...) asparagine glycans are attached at residues Asn591 and Asn620.

It belongs to the peptidase M36 family. Zn(2+) serves as cofactor.

It localises to the secreted. Functionally, secreted metalloproteinase probably acting as a virulence factor. The sequence is that of Extracellular metalloproteinase 5 (MEP5) from Arthroderma otae (strain ATCC MYA-4605 / CBS 113480) (Microsporum canis).